Consider the following 375-residue polypeptide: Homoserine O-succinyltransferase (375 aa).

The AB hydrolase-1 domain maps to 48–358; it reads NAVLVCHALS…DAGHDSFLLD (311 aa). S154 functions as the Nucleophile in the catalytic mechanism. R224 provides a ligand contact to substrate. Residues D319 and H352 contribute to the active site. D353 lines the substrate pocket.

Belongs to the AB hydrolase superfamily. MetX family. Homodimer.

The protein resides in the cytoplasm. The enzyme catalyses L-homoserine + succinyl-CoA = O-succinyl-L-homoserine + CoA. Its pathway is amino-acid biosynthesis; L-methionine biosynthesis via de novo pathway; O-succinyl-L-homoserine from L-homoserine: step 1/1. Transfers a succinyl group from succinyl-CoA to L-homoserine, forming succinyl-L-homoserine. In Aromatoleum aromaticum (strain DSM 19018 / LMG 30748 / EbN1) (Azoarcus sp. (strain EbN1)), this protein is Homoserine O-succinyltransferase.